We begin with the raw amino-acid sequence, 430 residues long: S-adenosylmethionine synthase (430 aa).

Histidine 14 provides a ligand contact to ATP. Aspartate 16 contacts Mg(2+). A K(+)-binding site is contributed by glutamate 42. L-methionine contacts are provided by glutamate 55 and glutamine 98. Positions 98-108 (QSADINRGVER) are flexible loop. ATP contacts are provided by residues 164-166 (DAK), 254-255 (KF), aspartate 263, 269-270 (RK), alanine 286, and lysine 290. Residue aspartate 263 coordinates L-methionine. Position 294 (lysine 294) interacts with L-methionine.

The protein belongs to the AdoMet synthase family. In terms of assembly, homotetramer; dimer of dimers. Mg(2+) serves as cofactor. K(+) is required as a cofactor.

Its subcellular location is the cytoplasm. The enzyme catalyses L-methionine + ATP + H2O = S-adenosyl-L-methionine + phosphate + diphosphate. It participates in amino-acid biosynthesis; S-adenosyl-L-methionine biosynthesis; S-adenosyl-L-methionine from L-methionine: step 1/1. Functionally, catalyzes the formation of S-adenosylmethionine (AdoMet) from methionine and ATP. The overall synthetic reaction is composed of two sequential steps, AdoMet formation and the subsequent tripolyphosphate hydrolysis which occurs prior to release of AdoMet from the enzyme. In Phocaeicola vulgatus (strain ATCC 8482 / DSM 1447 / JCM 5826 / CCUG 4940 / NBRC 14291 / NCTC 11154) (Bacteroides vulgatus), this protein is S-adenosylmethionine synthase.